A 76-amino-acid chain; its full sequence is Gas vesicle protein A1 (76 aa).

Binds to GvpF1 stretches follow at residues 1 to 22 and 2 to 43; these read MAQPDSSGLAEVLDRVLDKGVV and AQPD…EARV. The interval 9-19 is alpha helix 1; the sequence is LAEVLDRVLDK. The interval 23–31 is beta-strand 1; the sequence is VDVWARVSL. Residues 32 to 34 are beta turn; it reads VGI. Positions 35-43 are beta-strand 2; it reads EILTVEARV. The segment at 48-67 is alpha helix 2; the sequence is VDTFLHYAEEIAKIEQAELT.

The protein belongs to the gas vesicle GvpA family. In terms of assembly, major component of the gas vesicle shell which is 2 nm thick and consists of a single layer of the protein. It forms 4.6 nm-wide ribs nearly perpendicular to the long axis of the vesicle. Modeled as antiparallel homodimers. The ribs form a low-pitch helix rather than a stack of hoops. Interacts with GvpF1 via its N-terminus (residues 1-43) in early growth stages, none of the other GvpG1 to GvpM1 proteins were seen to directly bind GvpA1 in H.volcanii experiments. Might interact with GvpJ1. Might interact with GvpG1, GvpH1, GvpJ1, GvpM1, GvpN1 and GvpO1.

It is found in the gas vesicle shell. In terms of biological role, gas vesicles are hollow, gas filled proteinaceous nanostructures found in several microbial planktonic microorganisms. They allow positioning of halobacteria at the optimal depth for growth in the poorly aerated shallow brine pools of their habitat. GvpA forms the protein shell. The critical collapse pressure (CCP) of p-vac gas vesicles is 0.66 MPa; mutating residues in p-gvpA to those found in c-gvpA increases the CCP. These residues partially and independently control the width and strength of gas vesicles. In stationary phase gas vesicles, about 30 times more GvpA1 is found than GvpA2. Expression of a 9.5 kb p-vac DNA fragment containing 2 divergently transcribed regions (gvpD-gvpE-gvpF-gvpG-gvpH-gvpI-gvpJ-gvpK-gvpL-gvpM and gvpA-gvpC-gvpN-gvpO) allows H.volcanii to produce gas vesicles. All site-directed mutagenesis is tested in H.volcanii. A minimal gas vesicle can be made in H.volcanii by gvpA1-gvpO1 plus gvpF1-gvpG1-gvpJ1-gvpK1-gvpL1-gvpM1; lack of enough GvpJ1 prevents their formation. A similar region restores gas vesicle production in H.halobium without the p-vac locus, but it still has the c-vac locus. This chain is Gas vesicle protein A1, found in Halobacterium salinarum (strain ATCC 700922 / JCM 11081 / NRC-1) (Halobacterium halobium).